The chain runs to 241 residues: Phosphoribosylaminoimidazole-succinocarboxamide synthase (241 aa).

This sequence belongs to the SAICAR synthetase family.

It catalyses the reaction 5-amino-1-(5-phospho-D-ribosyl)imidazole-4-carboxylate + L-aspartate + ATP = (2S)-2-[5-amino-1-(5-phospho-beta-D-ribosyl)imidazole-4-carboxamido]succinate + ADP + phosphate + 2 H(+). Its pathway is purine metabolism; IMP biosynthesis via de novo pathway; 5-amino-1-(5-phospho-D-ribosyl)imidazole-4-carboxamide from 5-amino-1-(5-phospho-D-ribosyl)imidazole-4-carboxylate: step 1/2. In Oenococcus oeni (strain ATCC BAA-331 / PSU-1), this protein is Phosphoribosylaminoimidazole-succinocarboxamide synthase.